The chain runs to 272 residues: MYENGISFIISLLICGCVKSEEMMKQHFVLVHGSCLGAWCWYKVKPLLEASGHRVTALDLAACGIDTRSITDISTCEQYSEPLIQLMTSLPNDEKVVLVGHSYGGLTLAIAMDKFPDKISVSVFVTSFMPDTKNSPSFVLEKFASTMTPEDWMGSELEPYVVFSAEFTKHRILQLSPIEDLELRLLLKRPGSLFLNDLSRMKNFSEKGYGSVPRAYIVSKDDHTISEEYQRWMIDNYPPNLVIEMEGTDHLPLFCKPQLLSDHLLAIADKFS.

Serine 102 (acyl-ester intermediate) is an active-site residue. Active-site charge relay system residues include aspartate 222 and histidine 250.

It belongs to the AB hydrolase superfamily. Methylesterase family.

Its function is as follows. Methylesterase shown to have carboxylesterase activity in vitro. The chain is Methylesterase 8 from Arabidopsis thaliana (Mouse-ear cress).